Here is a 236-residue protein sequence, read N- to C-terminus: MPVKKKRKSGVAAAAAEDGGLKKCKISSYCRSQPPARLISGEEHFSSKKCLAWFYEYAGPDEVVGPEGMEKFCEDIGVEPENIIMLVLAWKLEAESMGFFTKEEWLKGMTSLQCDCTEKLQNKFDFLRSQLNDISSFKNIYRYAFDFARDKDQRSLDIDTAKSMLALLLGRTWPLFSVFYQYLEQSKYRVMNKDQWYNVLEFSRTVHADLSNYDEDGAWPVLLDEFVEWHKVRQAS.

Residues S9, S40, and S47 each carry the phosphoserine modification. A DCUN1 domain is found at 45 to 231; sequence FSSKKCLAWF…LLDEFVEWHK (187 aa).

Part of a complex that contains DCUN1D5, CUL1 and RBX1; this interaction is bridged by CUL1. Interacts (via the DCUN1 domain) with the unneddylated cullins: interacts with CUL1, CUL2, CUL3, CUL4A, CUL4B and CUL5; these interactions promote the cullin neddylation and the identity of the cullin dictates the affinity of the interaction. Interacts (via DCUN1 domain) with UBE2M (N-terminally acetylated form) and probably with UBE2F (N-terminally acetylated form). May also interact with regulators or subunits of cullin-RING ligases such as RBX1, RNF7, ELOB and DDB1; these interactions are bridged by cullins. Interacts with CAND1; this interaction is bridged by cullins and strongly inhibits the neddylation of cullins. These CAND-cullin-DCNL complexes can only be neddylated in the presence of a substrate adapter. In terms of processing, phosphorylation at Ser-40 is independent of cullin's interaction. Phosphorylated in response to both TICAM1 and MYD88 dependent Toll-like receptor (TLR) pathway activation. Phosphorylated in response to IL1B stimulation.

The protein localises to the nucleus. Its subcellular location is the cytoplasm. It is found in the cytoskeleton. The protein resides in the spindle. Contributes to the neddylation of all cullins by transferring NEDD8 from N-terminally acetylated NEDD8-conjugating E2s enzyme to different cullin C-terminal domain-RBX complexes which is necessary for the activation of cullin-RING E3 ubiquitin ligases (CRLs). May play a role in DNA damage response and may participate in cell proliferation and anchorage-independent cell growth. This chain is DCN1-like protein 5 (DCUN1D5), found in Bos taurus (Bovine).